We begin with the raw amino-acid sequence, 408 residues long: CinA-like protein (408 aa).

The protein belongs to the CinA family.

This is CinA-like protein from Thermotoga sp. (strain RQ2).